A 260-amino-acid chain; its full sequence is Flap endonuclease Xni (260 aa).

Position 109 (Asp-109) interacts with Mg(2+). The 95-residue stretch at Val-165 to Ala-259 folds into the 5'-3' exonuclease domain. Residues Leu-176, Pro-185, Val-187, and Val-190 each coordinate K(+). The interaction with DNA stretch occupies residues Gly-189–Ala-194.

The protein belongs to the Xni family. The cofactor is Mg(2+). It depends on K(+) as a cofactor.

Functionally, has flap endonuclease activity. During DNA replication, flap endonucleases cleave the 5'-overhanging flap structure that is generated by displacement synthesis when DNA polymerase encounters the 5'-end of a downstream Okazaki fragment. This is Flap endonuclease Xni from Vibrio campbellii (strain ATCC BAA-1116).